The following is a 117-amino-acid chain: Ribosome-binding factor A (117 aa).

It belongs to the RbfA family. Monomer. Binds 30S ribosomal subunits, but not 50S ribosomal subunits or 70S ribosomes.

It localises to the cytoplasm. Its function is as follows. One of several proteins that assist in the late maturation steps of the functional core of the 30S ribosomal subunit. Associates with free 30S ribosomal subunits (but not with 30S subunits that are part of 70S ribosomes or polysomes). Required for efficient processing of 16S rRNA. May interact with the 5'-terminal helix region of 16S rRNA. The polypeptide is Ribosome-binding factor A (Streptococcus thermophilus (strain CNRZ 1066)).